We begin with the raw amino-acid sequence, 420 residues long: Membrane protein UL43 homolog (420 aa).

11 consecutive transmembrane segments (helical) span residues 58–78, 81–101, 114–134, 157–177, 181–201, 203–223, 278–298, 312–332, 343–363, 364–384, and 399–419; these read IFSI…IQFI, KIIY…AFIV, IGKP…TLIT, LMCF…CLAT, LTWK…ISAP, GNIS…INVV, QIPM…VIAL, TDML…IFIP, IIIL…FGLV, LGPT…CINI, and VVKS…LVAL.

It belongs to the alphaherpesvirinae HHV-1 UL43 family.

It is found in the host membrane. This is Membrane protein UL43 homolog (MDV056) from Gallus gallus (Chicken).